Here is a 605-residue protein sequence, read N- to C-terminus: Glutamine--fructose-6-phosphate aminotransferase [isomerizing] (605 aa).

C2 acts as the Nucleophile; for GATase activity in catalysis. In terms of domain architecture, Glutamine amidotransferase type-2 spans 2–219 (CGIVGVVGSK…DKELVVLTKD (218 aa)). SIS domains lie at 285 to 424 (IIKG…AEGE) and 457 to 595 (VADL…VDKP). Catalysis depends on K600, which acts as the For Fru-6P isomerization activity.

As to quaternary structure, homodimer.

It localises to the cytoplasm. The catalysed reaction is D-fructose 6-phosphate + L-glutamine = D-glucosamine 6-phosphate + L-glutamate. Catalyzes the first step in hexosamine metabolism, converting fructose-6P into glucosamine-6P using glutamine as a nitrogen source. The chain is Glutamine--fructose-6-phosphate aminotransferase [isomerizing] from Lactococcus lactis subsp. lactis (strain IL1403) (Streptococcus lactis).